A 432-amino-acid chain; its full sequence is 3-phosphoshikimate 1-carboxyvinyltransferase (432 aa).

3-phosphoshikimate is bound by residues K23, S24, and R28. K23 is a binding site for phosphoenolpyruvate. Residues G96 and R125 each contribute to the phosphoenolpyruvate site. Residues S170, Q172, D318, and K345 each contribute to the 3-phosphoshikimate site. Residue Q172 participates in phosphoenolpyruvate binding. Residue D318 is the Proton acceptor of the active site. The phosphoenolpyruvate site is built by R349 and R391.

This sequence belongs to the EPSP synthase family. As to quaternary structure, monomer.

It localises to the cytoplasm. The catalysed reaction is 3-phosphoshikimate + phosphoenolpyruvate = 5-O-(1-carboxyvinyl)-3-phosphoshikimate + phosphate. It functions in the pathway metabolic intermediate biosynthesis; chorismate biosynthesis; chorismate from D-erythrose 4-phosphate and phosphoenolpyruvate: step 6/7. In terms of biological role, catalyzes the transfer of the enolpyruvyl moiety of phosphoenolpyruvate (PEP) to the 5-hydroxyl of shikimate-3-phosphate (S3P) to produce enolpyruvyl shikimate-3-phosphate and inorganic phosphate. This Gloeobacter violaceus (strain ATCC 29082 / PCC 7421) protein is 3-phosphoshikimate 1-carboxyvinyltransferase.